The following is a 680-amino-acid chain: ABC transporter B family member 24, mitochondrial (680 aa).

The N-terminal 75 residues, 1–75, are a transit peptide targeting the mitochondrion; sequence MMRVSQLQLC…MFFSTSTSAP (75 aa). The ABC transmembrane type-1 domain maps to 108–402; it reads VISAFACLVG…LGVVYSDTVQ (295 aa). A run of 6 helical transmembrane segments spans residues 109 to 129, 145 to 165, 232 to 252, 255 to 275, 340 to 360, and 376 to 396; these read ISAF…PFLF, NPYL…YGIA, AMVF…CILA, FGAV…AFTL, FALL…TAMV, and LVMV…LGVV. The ABC transporter domain occupies 439 to 673; that stretch reads ISFENVHFSY…SGRYAKLWTQ (235 aa). ATP-binding positions include tyrosine 448 and 472–483; that span reads GSSGSGKSTILR.

The protein belongs to the ABC transporter superfamily. ABCB family. Heavy Metal importer (TC 3.A.1.210) subfamily. In terms of assembly, homodimer. In terms of tissue distribution, mostly expressed at low levels in roots and flowers.

The protein localises to the mitochondrion inner membrane. Performs an essential function in the generation of cytoplasmic iron-sulfur proteins by mediating export of Fe/S cluster precursors synthesized by NFS1 and other mitochondrial proteins. Not involved in the export of cyclic pyranopterin monophosphate (cPMP) from mitochondria to the cytosol. In Arabidopsis thaliana (Mouse-ear cress), this protein is ABC transporter B family member 24, mitochondrial (ABCB24).